Here is a 48-residue protein sequence, read N- to C-terminus: Disintegrin leucogastin-A (48 aa).

A Disintegrin domain is found at 1 to 47; it reads DCASGPCCRDCKFLEEFTICNMARGDDMNDYCNGKTCDCPRNPHKWP. 4 cysteine pairs are disulfide-bonded: C2/C11, C7/C32, C8/C37, and C20/C39. A Cell attachment site motif is present at residues 24–26; sequence RGD.

The protein belongs to the venom metalloproteinase (M12B) family. P-II subfamily. P-IIa sub-subfamily. As to quaternary structure, monomer (disintegrin). Expressed by the venom gland.

Its subcellular location is the secreted. Functionally, inhibits ADP-induced human platelet aggregation. The polypeptide is Disintegrin leucogastin-A (Echis leucogaster (Roman's saw-scaled viper)).